We begin with the raw amino-acid sequence, 348 residues long: tRNA N6-adenosine threonylcarbamoyltransferase (348 aa).

Residues H115 and H119 each coordinate Fe cation. Residues 137–141 (LASGG), D170, G183, and N281 contribute to the substrate site. D309 is a Fe cation binding site.

It belongs to the KAE1 / TsaD family. Fe(2+) serves as cofactor.

Its subcellular location is the cytoplasm. The enzyme catalyses L-threonylcarbamoyladenylate + adenosine(37) in tRNA = N(6)-L-threonylcarbamoyladenosine(37) in tRNA + AMP + H(+). Its function is as follows. Required for the formation of a threonylcarbamoyl group on adenosine at position 37 (t(6)A37) in tRNAs that read codons beginning with adenine. Is involved in the transfer of the threonylcarbamoyl moiety of threonylcarbamoyl-AMP (TC-AMP) to the N6 group of A37, together with TsaE and TsaB. TsaD likely plays a direct catalytic role in this reaction. The protein is tRNA N6-adenosine threonylcarbamoyltransferase of Methylobacterium sp. (strain 4-46).